We begin with the raw amino-acid sequence, 245 residues long: NAD(P)H-hydrate epimerase (245 aa).

The YjeF N-terminal domain occupies 16–224 (AAALDAELMA…HIADKYDLEV (209 aa)). 68-72 (NNGGD) is a (6S)-NADPHX binding site. K(+) is bound by residues Asn-69 and Asp-131. Residues 135–141 (GFSFKPP) and Asp-164 contribute to the (6S)-NADPHX site. Ser-167 contributes to the K(+) binding site.

It belongs to the NnrE/AIBP family. K(+) is required as a cofactor.

It is found in the cytoplasm. Its subcellular location is the mitochondrion. The catalysed reaction is (6R)-NADHX = (6S)-NADHX. The enzyme catalyses (6R)-NADPHX = (6S)-NADPHX. Catalyzes the epimerization of the S- and R-forms of NAD(P)HX, a damaged form of NAD(P)H that is a result of enzymatic or heat-dependent hydration. This is a prerequisite for the S-specific NAD(P)H-hydrate dehydratase to allow the repair of both epimers of NAD(P)HX. This is NAD(P)H-hydrate epimerase from Yarrowia lipolytica (strain CLIB 122 / E 150) (Yeast).